A 156-amino-acid chain; its full sequence is Dynein 16 kDa light chain, flagellar outer arm (156 aa).

The 115-residue stretch at 2 to 116 (AAGLPPVQYS…LNQQVLSLTP (115 aa)) folds into the Thioredoxin domain. A disulfide bond links C37 and C40.

Consists of at least 3 heavy chains (alpha, beta and gamma), 2 intermediate chains and 8 light chains.

The protein localises to the cell projection. It is found in the cilium. The protein resides in the flagellum. It localises to the cytoplasm. Its subcellular location is the cytoskeleton. The protein localises to the flagellum axoneme. May be involved in regulating the redox state of functionally important thiol groups within dynein. This chain is Dynein 16 kDa light chain, flagellar outer arm, found in Chlamydomonas reinhardtii (Chlamydomonas smithii).